The chain runs to 263 residues: Neuferricin (263 aa).

The signal sequence occupies residues methionine 1–alanine 22. The Cytochrome b5 heme-binding domain occupies isoleucine 35 to valine 134. The tract at residues valine 220–tyrosine 249 is disordered. Positions aspartate 231–leucine 241 are enriched in basic and acidic residues.

Belongs to the cytochrome b5 family. MAPR subfamily. Expressed in various tissues including brain, heart, adrenal gland, and kidney. In the brain, mainly expressed in pyramidal cells around the CA3 region of Ammon horn in hippocampus. Present in brain (at protein level).

The protein localises to the secreted. Heme-binding protein which promotes neuronal but not astrocyte differentiation. This chain is Neuferricin, found in Mus musculus (Mouse).